A 360-amino-acid polypeptide reads, in one-letter code: GTPase Obg (360 aa).

In terms of domain architecture, Obg spans 1-156 (MFVDSVEIII…KCVRLELKLI (156 aa)). Residues 157-360 (ADIGLVGFPN…LKFVLLEALP (204 aa)) form the OBG-type G domain. GTP contacts are provided by residues 163 to 170 (GFPNAGKS), 188 to 192 (FTTLV), 210 to 213 (DIPG), 279 to 282 (NKCD), and 341 to 343 (SAV). Mg(2+) is bound by residues Ser170 and Thr190.

The protein belongs to the TRAFAC class OBG-HflX-like GTPase superfamily. OBG GTPase family. In terms of assembly, monomer. Mg(2+) is required as a cofactor.

The protein localises to the cytoplasm. An essential GTPase which binds GTP, GDP and possibly (p)ppGpp with moderate affinity, with high nucleotide exchange rates and a fairly low GTP hydrolysis rate. Plays a role in control of the cell cycle, stress response, ribosome biogenesis and in those bacteria that undergo differentiation, in morphogenesis control. This is GTPase Obg from Helicobacter acinonychis (strain Sheeba).